A 126-amino-acid polypeptide reads, in one-letter code: DNA-directed RNA polymerase I subunit RPA12 (126 aa).

Positions 20, 23, 38, 41, 87, and 90 each coordinate Zn(2+). The C4-type zinc finger occupies 20 to 41; sequence CSDCGSVLPLPGAQDTVTCIRC. Residues 83–123 form a TFIIS-type zinc finger; that stretch reads VDRRCPRCGHEGMAYHTRQMRSADEGQTVFYTCTNCKFQEK. The Hairpin motif lies at 106 to 107; it reads DE. Zn(2+) is bound by residues C115 and C118.

The protein belongs to the archaeal RpoM/eukaryotic RPA12/RPB9/RPC11 RNA polymerase family. In terms of assembly, component of the RNA polymerase I (Pol I) complex consisting of 13 subunits: a ten-subunit catalytic core composed of POLR1A/RPA1, POLR1B/RPA2, POLR1C/RPAC1, POLR1D/RPAC2, POLR1H/RPA12, POLR2E/RPABC1, POLR2F/RPABC2, POLR2H/RPABC3, POLR2K/RPABC4 and POLR2L/RPABC5; a mobile stalk subunit POLR1F/RPA43 protruding from the core and additional subunits homologous to general transcription factors POLR1E/RPA49 and POLR1G/RPA34. Part of Pol I pre-initiation complex (PIC), in which Pol I core assembles with RRN3 and promoter-bound UTBF and SL1/TIF-IB complex.

The protein resides in the nucleus. It localises to the nucleolus. In terms of biological role, core component of RNA polymerase I (Pol I), a DNA-dependent RNA polymerase which synthesizes ribosomal RNA precursors using the four ribonucleoside triphosphates as substrates. Can mediate Pol I proofreading of the nascent RNA transcript. Anchors into the Pol I active site to monitor transcription fidelity and cleave mis-incorporated 5'-ribonucleotides. This is DNA-directed RNA polymerase I subunit RPA12 from Homo sapiens (Human).